We begin with the raw amino-acid sequence, 164 residues long: Peptide deformylase-like (164 aa).

E134 is an active-site residue.

Belongs to the polypeptide deformylase family.

The polypeptide is Peptide deformylase-like (Brucella melitensis biotype 1 (strain ATCC 23456 / CCUG 17765 / NCTC 10094 / 16M)).